The following is a 469-amino-acid chain: Diacetylchitobiose binding protein NgcE (469 aa).

The tat-type signal signal peptide spans 1-37 (MTIRAGSLDRRTLLRGAIATAAMGSFAVACSSPSSED). The interval 30 to 54 (CSSPSSEDKESDSGPKGEKSANNPF) is disordered. Over residues 35–48 (SEDKESDSGPKGEK) the composition is skewed to basic and acidic residues.

The protein belongs to the bacterial solute-binding protein 1 family. As to quaternary structure, the complex is composed of two ATP-binding proteins (MsiK), two transmembrane proteins (NgcF and NgcG) and a solute-binding protein (NgcE). In terms of processing, predicted to be exported by the Tat system. The position of the signal peptide cleavage has not been experimentally proven.

It is found in the cell membrane. Functionally, part of the ABC transporter complex NgcEFG-MsiK involved in N,N'-diacetylchitobiose ((GlcNAc)2) uptake. Binds (GlcNAc)2. Can also bind GlcNAc. This Streptomyces coelicolor (strain ATCC BAA-471 / A3(2) / M145) protein is Diacetylchitobiose binding protein NgcE.